We begin with the raw amino-acid sequence, 283 residues long: Bifunctional protein FolD (283 aa).

NADP(+)-binding positions include 164–166 (GRS), S189, and T230.

This sequence belongs to the tetrahydrofolate dehydrogenase/cyclohydrolase family. In terms of assembly, homodimer.

It catalyses the reaction (6R)-5,10-methylene-5,6,7,8-tetrahydrofolate + NADP(+) = (6R)-5,10-methenyltetrahydrofolate + NADPH. It carries out the reaction (6R)-5,10-methenyltetrahydrofolate + H2O = (6R)-10-formyltetrahydrofolate + H(+). Its pathway is one-carbon metabolism; tetrahydrofolate interconversion. In terms of biological role, catalyzes the oxidation of 5,10-methylenetetrahydrofolate to 5,10-methenyltetrahydrofolate and then the hydrolysis of 5,10-methenyltetrahydrofolate to 10-formyltetrahydrofolate. In Dictyoglomus thermophilum (strain ATCC 35947 / DSM 3960 / H-6-12), this protein is Bifunctional protein FolD.